We begin with the raw amino-acid sequence, 164 residues long: Phosphopantetheine adenylyltransferase (164 aa).

Thr-10 contacts substrate. ATP contacts are provided by residues 10-11 (TF) and His-18. Residues Lys-44, Leu-76, and Arg-90 each contribute to the substrate site. ATP is bound by residues 91-93 (GLR), Glu-101, and 126-132 (YAFISSS).

It belongs to the bacterial CoaD family. As to quaternary structure, homohexamer. Mg(2+) serves as cofactor.

The protein localises to the cytoplasm. It carries out the reaction (R)-4'-phosphopantetheine + ATP + H(+) = 3'-dephospho-CoA + diphosphate. Its pathway is cofactor biosynthesis; coenzyme A biosynthesis; CoA from (R)-pantothenate: step 4/5. Functionally, reversibly transfers an adenylyl group from ATP to 4'-phosphopantetheine, yielding dephospho-CoA (dPCoA) and pyrophosphate. This chain is Phosphopantetheine adenylyltransferase, found in Halorhodospira halophila (strain DSM 244 / SL1) (Ectothiorhodospira halophila (strain DSM 244 / SL1)).